The following is a 122-amino-acid chain: Large ribosomal subunit protein uL18 (122 aa).

Belongs to the universal ribosomal protein uL18 family. Part of the 50S ribosomal subunit; part of the 5S rRNA/L5/L18/L25 subcomplex. Contacts the 5S and 23S rRNAs.

Its function is as follows. This is one of the proteins that bind and probably mediate the attachment of the 5S RNA into the large ribosomal subunit, where it forms part of the central protuberance. In Pseudothermotoga lettingae (strain ATCC BAA-301 / DSM 14385 / NBRC 107922 / TMO) (Thermotoga lettingae), this protein is Large ribosomal subunit protein uL18.